Here is a 184-residue protein sequence, read N- to C-terminus: Elongation factor P (184 aa).

Belongs to the elongation factor P family.

The protein resides in the cytoplasm. The protein operates within protein biosynthesis; polypeptide chain elongation. In terms of biological role, involved in peptide bond synthesis. Stimulates efficient translation and peptide-bond synthesis on native or reconstituted 70S ribosomes in vitro. Probably functions indirectly by altering the affinity of the ribosome for aminoacyl-tRNA, thus increasing their reactivity as acceptors for peptidyl transferase. The polypeptide is Elongation factor P (Delftia acidovorans (strain DSM 14801 / SPH-1)).